A 274-amino-acid polypeptide reads, in one-letter code: Large ribosomal subunit protein uL2cz/uL2cy (274 aa).

Disordered stretches follow at residues 1 to 26 and 223 to 274; these read MAIH…KSNP and MNPV…RRSK.

The protein belongs to the universal ribosomal protein uL2 family. Part of the 50S ribosomal subunit.

The protein resides in the plastid. The protein localises to the chloroplast. In Daucus carota (Wild carrot), this protein is Large ribosomal subunit protein uL2cz/uL2cy (rpl2-A).